The chain runs to 549 residues: Glucose-6-phosphate isomerase (549 aa).

Glu-355 (proton donor) is an active-site residue. Catalysis depends on residues His-386 and Lys-514.

The protein belongs to the GPI family.

The protein localises to the cytoplasm. It catalyses the reaction alpha-D-glucose 6-phosphate = beta-D-fructose 6-phosphate. It participates in carbohydrate biosynthesis; gluconeogenesis. Its pathway is carbohydrate degradation; glycolysis; D-glyceraldehyde 3-phosphate and glycerone phosphate from D-glucose: step 2/4. Catalyzes the reversible isomerization of glucose-6-phosphate to fructose-6-phosphate. The chain is Glucose-6-phosphate isomerase from Salmonella enteritidis PT4 (strain P125109).